Reading from the N-terminus, the 491-residue chain is Cytochrome P450 2B3 (491 aa).

Heme is bound at residue Cys436.

This sequence belongs to the cytochrome P450 family. Requires heme as cofactor. Liver. Not found in the lung, kidney and prostate.

The protein resides in the endoplasmic reticulum membrane. Its subcellular location is the microsome membrane. The enzyme catalyses an organic molecule + reduced [NADPH--hemoprotein reductase] + O2 = an alcohol + oxidized [NADPH--hemoprotein reductase] + H2O + H(+). Functionally, cytochromes P450 are a group of heme-thiolate monooxygenases. In liver microsomes, this enzyme is involved in an NADPH-dependent electron transport pathway. It oxidizes a variety of structurally unrelated compounds, including steroids, fatty acids, and xenobiotics. The protein is Cytochrome P450 2B3 (Cyp2b3) of Rattus norvegicus (Rat).